Consider the following 472-residue polypeptide: 3beta,22alpha-dihydroxysteroid 3-dehydrogenase (472 aa).

A helical membrane pass occupies residues 1–21 (MAFTAFLLLLSSIAAGFLLLL). Residue Cys418 participates in heme binding.

It belongs to the cytochrome P450 family. The cofactor is heme.

The protein localises to the membrane. It carries out the reaction (22S)-22-hydroxycampesterol + reduced [NADPH--hemoprotein reductase] + O2 = (22S)-22-hydroxycampest-4-en-3-one + oxidized [NADPH--hemoprotein reductase] + 2 H2O + H(+). It catalyses the reaction 6-deoxoteasterone + reduced [NADPH--hemoprotein reductase] + O2 = 3-dehydro-6-deoxoteasterone + oxidized [NADPH--hemoprotein reductase] + 2 H2O + H(+). The catalysed reaction is 6-deoxycathasterone + reduced [NADPH--hemoprotein reductase] + O2 = (22S,24R)-22-hydroxy-5alpha-ergostan-3-one + oxidized [NADPH--hemoprotein reductase] + 2 H2O + H(+). The enzyme catalyses (22R,23R)-22,23-dihydroxycampesterol + reduced [NADPH--hemoprotein reductase] + O2 = (22R,23R)-22,23-dihydroxycampest-4-en-3-one + oxidized [NADPH--hemoprotein reductase] + 2 H2O + H(+). The protein operates within plant hormone biosynthesis; brassinosteroid biosynthesis. Catalyzes C3-oxidation steps in brassinosteroids biosynthesis. Converts (22S)-22-hydroxycampesterol (22-OHCR) to (22S,24R)-22-hydroxyergost-4-en-3-one (22-hydroxy-campesta-4-en-3-one, 22-OH-4-en-3-one), 6-deoxocathasterone (6-deoxoCT) to (22S,24R)-22-hydroxy-5alpha-ergostan-3-one (22-hydroxy-campesta-3-one, 22-OH-3-one), (22R,23R)-22,23-dihydroxycampesterol (22,23-diOHCR) to (22R,23R)-22,23-dihydroxy-campest-4-en-3-one (22,23-diOH-4-en-3-one), and 6-deoxoteasterone (6-deoxoTE) to 3-dehydro-6-deoxoteasterone (6-deoxo3DT, 6-deoxo-3-DHT). The chain is 3beta,22alpha-dihydroxysteroid 3-dehydrogenase from Arabidopsis thaliana (Mouse-ear cress).